The primary structure comprises 299 residues: Large ribosomal subunit protein uL18 (299 aa).

The protein belongs to the universal ribosomal protein uL18 family. Component of the large ribosomal subunit (LSU).

Its subcellular location is the cytoplasm. It localises to the nucleus. Component of the ribosome, a large ribonucleoprotein complex responsible for the synthesis of proteins in the cell. The small ribosomal subunit (SSU) binds messenger RNAs (mRNAs) and translates the encoded message by selecting cognate aminoacyl-transfer RNA (tRNA) molecules. The large subunit (LSU) contains the ribosomal catalytic site termed the peptidyl transferase center (PTC), which catalyzes the formation of peptide bonds, thereby polymerizing the amino acids delivered by tRNAs into a polypeptide chain. The nascent polypeptides leave the ribosome through a tunnel in the LSU and interact with protein factors that function in enzymatic processing, targeting, and the membrane insertion of nascent chains at the exit of the ribosomal tunnel. The polypeptide is Large ribosomal subunit protein uL18 (RpL5) (Bombyx mori (Silk moth)).